The following is a 294-amino-acid chain: MRQIAFYGKGGIGKSTTSQNTLAAMANRHGQRIMIVGCDPKADSTRLILDAKAQTTVLHVAAELGAVEDVELDQVLKPGFGGIKCVESGGPEPGVGCAGRGIITAINFLEEEGAYTDLDFVSYDVLGDVVCGGFAMPIRENKAQEIYIVCSGEMMAMYAANNIARGVLKYAHAGGVRLGGLICNSRKVDRETELIENLAARLNTQMIHFVPRDNVVQRAEIRRLTVEQYAPEDNQAQEYNKLAEKIINNEKLTIPTPLEMDELEELLIEFGLLAATKKIVRNKLQHKMQQQQKK.

8 to 15 lines the ATP pocket; the sequence is GKGGIGKS. Cys-97 contacts [4Fe-4S] cluster. Position 100 is an ADP-ribosylarginine; by dinitrogenase reductase ADP-ribosyltransferase (Arg-100). Cys-131 is a binding site for [4Fe-4S] cluster.

This sequence belongs to the NifH/BchL/ChlL family. As to quaternary structure, homodimer. The cofactor is [4Fe-4S] cluster. In terms of processing, the reversible ADP-ribosylation of Arg-100 inactivates the nitrogenase reductase and regulates nitrogenase activity.

It catalyses the reaction N2 + 8 reduced [2Fe-2S]-[ferredoxin] + 16 ATP + 16 H2O = H2 + 8 oxidized [2Fe-2S]-[ferredoxin] + 2 NH4(+) + 16 ADP + 16 phosphate + 6 H(+). In terms of biological role, the key enzymatic reactions in nitrogen fixation are catalyzed by the nitrogenase complex, which has 2 components: the iron protein and the molybdenum-iron protein. In Trichodesmium thiebautii, this protein is Nitrogenase iron protein (nifH).